A 206-amino-acid polypeptide reads, in one-letter code: Small ribosomal subunit protein uS5 (206 aa).

Positions 1–23 (MTDTPTKQENQSKTENPPSSNAN) are enriched in polar residues. Positions 1-52 (MTDTPTKQENQSKTENPPSSNANEQRRGNRNNDRKRNRRGDSKNERDSEWQE) are disordered. The segment covering 24 to 52 (EQRRGNRNNDRKRNRRGDSKNERDSEWQE) has biased composition (basic and acidic residues). The region spanning 50–113 (WQERVVQIRR…SDGKKHLVRV (64 aa)) is the S5 DRBM domain.

The protein belongs to the universal ribosomal protein uS5 family. As to quaternary structure, part of the 30S ribosomal subunit. Contacts proteins S4 and S8.

With S4 and S12 plays an important role in translational accuracy. Its function is as follows. Located at the back of the 30S subunit body where it stabilizes the conformation of the head with respect to the body. The sequence is that of Small ribosomal subunit protein uS5 from Prochlorococcus marinus subsp. pastoris (strain CCMP1986 / NIES-2087 / MED4).